The chain runs to 76 residues: MGSFSIWHWLIVLLIVVLVFGTKKLKNIGSDLGGAVKGFKDGVRDGSTAPADPAQQVTANKSADANTVDVEAKQKS.

Residues 1–21 (MGSFSIWHWLIVLLIVVLVFG) traverse the membrane as a helical segment. The disordered stretch occupies residues 44-76 (RDGSTAPADPAQQVTANKSADANTVDVEAKQKS). A compositionally biased stretch (polar residues) spans 55–65 (QQVTANKSADA).

This sequence belongs to the TatA/E family. As to quaternary structure, the Tat system comprises two distinct complexes: a TatABC complex, containing multiple copies of TatA, TatB and TatC subunits, and a separate TatA complex, containing only TatA subunits. Substrates initially bind to the TatABC complex, which probably triggers association of the separate TatA complex to form the active translocon.

It localises to the cell inner membrane. In terms of biological role, part of the twin-arginine translocation (Tat) system that transports large folded proteins containing a characteristic twin-arginine motif in their signal peptide across membranes. TatA could form the protein-conducting channel of the Tat system. In Methylibium petroleiphilum (strain ATCC BAA-1232 / LMG 22953 / PM1), this protein is Sec-independent protein translocase protein TatA.